A 271-amino-acid polypeptide reads, in one-letter code: Indole-3-glycerol phosphate synthase (271 aa).

The protein belongs to the TrpC family.

It carries out the reaction 1-(2-carboxyphenylamino)-1-deoxy-D-ribulose 5-phosphate + H(+) = (1S,2R)-1-C-(indol-3-yl)glycerol 3-phosphate + CO2 + H2O. Its pathway is amino-acid biosynthesis; L-tryptophan biosynthesis; L-tryptophan from chorismate: step 4/5. The chain is Indole-3-glycerol phosphate synthase from Lachnoclostridium phytofermentans (strain ATCC 700394 / DSM 18823 / ISDg) (Clostridium phytofermentans).